Consider the following 84-residue polypeptide: Subtilisin-chymotrypsin inhibitor-2A (84 aa).

A disordered region spans residues 1–23 (MSSVEKKPEGVNTGAGDRHNLKT).

The protein belongs to the protease inhibitor I13 (potato type I serine protease inhibitor) family.

Its function is as follows. Inhibits both subtilisin and chymotrypsin. The polypeptide is Subtilisin-chymotrypsin inhibitor-2A (Hordeum vulgare (Barley)).